The following is a 483-amino-acid chain: Probable L-xylulose kinase (483 aa).

It belongs to the FGGY kinase family. In terms of assembly, homodimer.

It catalyses the reaction L-xylulose + ATP = L-xylulose 5-phosphate + ADP + H(+). The protein is Probable L-xylulose kinase (lyx) of Pasteurella multocida (strain Pm70).